A 193-amino-acid chain; its full sequence is Large ribosomal subunit protein uL5 (193 aa).

It belongs to the universal ribosomal protein uL5 family. Part of the 50S ribosomal subunit; part of the 5S rRNA/L5/L18/L25 subcomplex. Contacts the 5S rRNA and the P site tRNA. Forms a bridge to the 30S subunit in the 70S ribosome.

This is one of the proteins that bind and probably mediate the attachment of the 5S RNA into the large ribosomal subunit, where it forms part of the central protuberance. In the 70S ribosome it contacts protein S13 of the 30S subunit (bridge B1b), connecting the 2 subunits; this bridge is implicated in subunit movement. Contacts the P site tRNA; the 5S rRNA and some of its associated proteins might help stabilize positioning of ribosome-bound tRNAs. In Rhizorhabdus wittichii (strain DSM 6014 / CCUG 31198 / JCM 15750 / NBRC 105917 / EY 4224 / RW1) (Sphingomonas wittichii), this protein is Large ribosomal subunit protein uL5.